The following is a 159-amino-acid chain: Ribosomal RNA large subunit methyltransferase H (159 aa).

S-adenosyl-L-methionine is bound by residues Leu76, Gly108, and 127–132 (FGLLTL).

The protein belongs to the RNA methyltransferase RlmH family. As to quaternary structure, homodimer.

Its subcellular location is the cytoplasm. It catalyses the reaction pseudouridine(1915) in 23S rRNA + S-adenosyl-L-methionine = N(3)-methylpseudouridine(1915) in 23S rRNA + S-adenosyl-L-homocysteine + H(+). In terms of biological role, specifically methylates the pseudouridine at position 1915 (m3Psi1915) in 23S rRNA. The sequence is that of Ribosomal RNA large subunit methyltransferase H from Streptococcus equi subsp. zooepidemicus (strain H70).